A 65-amino-acid chain; its full sequence is Protein translocase subunit SecE (65 aa).

The helical transmembrane segment at 44–64 threads the bilayer; sequence LVMAVVGLIAYIVQLTTSLII.

Belongs to the SecE/SEC61-gamma family. In terms of assembly, component of the Sec protein translocase complex. Heterotrimer consisting of SecY (alpha), SecG (beta) and SecE (gamma) subunits. The heterotrimers can form oligomers, although 1 heterotrimer is thought to be able to translocate proteins. Interacts with the ribosome. May interact with SecDF, and other proteins may be involved.

Its subcellular location is the cell membrane. Functionally, essential subunit of the Sec protein translocation channel SecYEG. Clamps together the 2 halves of SecY. May contact the channel plug during translocation. This Sulfolobus acidocaldarius (strain ATCC 33909 / DSM 639 / JCM 8929 / NBRC 15157 / NCIMB 11770) protein is Protein translocase subunit SecE.